A 409-amino-acid chain; its full sequence is UDP-N-acetylglucosamine--N-acetylmuramyl-(pentapeptide) pyrophosphoryl-undecaprenol N-acetylglucosamine transferase (409 aa).

Residues 11 to 13 (TGG), Asn125, Arg169, Ser199, and Gln299 contribute to the UDP-N-acetyl-alpha-D-glucosamine site.

It belongs to the glycosyltransferase 28 family. MurG subfamily.

Its subcellular location is the cell membrane. It carries out the reaction di-trans,octa-cis-undecaprenyl diphospho-N-acetyl-alpha-D-muramoyl-L-alanyl-D-glutamyl-meso-2,6-diaminopimeloyl-D-alanyl-D-alanine + UDP-N-acetyl-alpha-D-glucosamine = di-trans,octa-cis-undecaprenyl diphospho-[N-acetyl-alpha-D-glucosaminyl-(1-&gt;4)]-N-acetyl-alpha-D-muramoyl-L-alanyl-D-glutamyl-meso-2,6-diaminopimeloyl-D-alanyl-D-alanine + UDP + H(+). Its pathway is cell wall biogenesis; peptidoglycan biosynthesis. Cell wall formation. Catalyzes the transfer of a GlcNAc subunit on undecaprenyl-pyrophosphoryl-MurNAc-pentapeptide (lipid intermediate I) to form undecaprenyl-pyrophosphoryl-MurNAc-(pentapeptide)GlcNAc (lipid intermediate II). This chain is UDP-N-acetylglucosamine--N-acetylmuramyl-(pentapeptide) pyrophosphoryl-undecaprenol N-acetylglucosamine transferase, found in Clostridioides difficile (strain 630) (Peptoclostridium difficile).